The sequence spans 228 residues: UPF0502 protein AZOSEA09860 (228 aa).

The protein belongs to the UPF0502 family.

The chain is UPF0502 protein AZOSEA09860 from Aromatoleum aromaticum (strain DSM 19018 / LMG 30748 / EbN1) (Azoarcus sp. (strain EbN1)).